The chain runs to 142 residues: Small ribosomal subunit protein uS12 (142 aa).

This sequence belongs to the universal ribosomal protein uS12 family. As to quaternary structure, part of the 30S ribosomal subunit.

In terms of biological role, with S4 and S5 plays an important role in translational accuracy. Located at the interface of the 30S and 50S subunits. The chain is Small ribosomal subunit protein uS12 from Methanosarcina mazei (strain ATCC BAA-159 / DSM 3647 / Goe1 / Go1 / JCM 11833 / OCM 88) (Methanosarcina frisia).